Consider the following 397-residue polypeptide: DNA-directed RNA polymerase subunit Rpo1C (397 aa).

The protein belongs to the RNA polymerase beta' chain family. Part of the RNA polymerase complex.

The protein localises to the cytoplasm. The catalysed reaction is RNA(n) + a ribonucleoside 5'-triphosphate = RNA(n+1) + diphosphate. Its function is as follows. DNA-dependent RNA polymerase (RNAP) catalyzes the transcription of DNA into RNA using the four ribonucleoside triphosphates as substrates. Forms part of the jaw domain. This Pyrococcus horikoshii (strain ATCC 700860 / DSM 12428 / JCM 9974 / NBRC 100139 / OT-3) protein is DNA-directed RNA polymerase subunit Rpo1C.